We begin with the raw amino-acid sequence, 258 residues long: UDP-N-acetylenolpyruvoylglucosamine reductase (258 aa).

R142 is a catalytic residue. S184 acts as the Proton donor in catalysis. Residue E254 is part of the active site.

Belongs to the MurB family. The cofactor is FAD.

The protein localises to the cytoplasm. It catalyses the reaction UDP-N-acetyl-alpha-D-muramate + NADP(+) = UDP-N-acetyl-3-O-(1-carboxyvinyl)-alpha-D-glucosamine + NADPH + H(+). The protein operates within cell wall biogenesis; peptidoglycan biosynthesis. In terms of biological role, cell wall formation. The sequence is that of UDP-N-acetylenolpyruvoylglucosamine reductase from Campylobacter jejuni subsp. jejuni serotype O:2 (strain ATCC 700819 / NCTC 11168).